A 264-amino-acid polypeptide reads, in one-letter code: MKTYLDLLSHVLNKGIDRTDRTGVGTRSVFGYQMRFDLQAGFPLLTTKKLHLRSIIYELLWFLRGDTNIAWLKEHGVSIWDEWADEKGNLGPIYGYQWRSWPAPDGRHIDQISNLLMMIKKTPDSRRLIVSAWNPASIKEMALPPCHCFFQFYVADGKLSCQLYQRSADIFLGIPFNIASYALLTMMIAQVSGLKVGDFIHTLGDAHLYSNHFEQAQHQLSRIPNALPFMRINPAVTDLFSFKFEDFELLNYDAQPHIKAPIAV.

Residue R21 coordinates dUMP. A (6R)-5,10-methylene-5,6,7,8-tetrahydrofolate-binding site is contributed by H51. 126-127 serves as a coordination point for dUMP; the sequence is RR. C146 acts as the Nucleophile in catalysis. DUMP contacts are provided by residues 166-169, N177, and 207-209; these read RSAD and HLY. D169 is a (6R)-5,10-methylene-5,6,7,8-tetrahydrofolate binding site. A263 is a binding site for (6R)-5,10-methylene-5,6,7,8-tetrahydrofolate.

The protein belongs to the thymidylate synthase family. Bacterial-type ThyA subfamily. As to quaternary structure, homodimer.

The protein localises to the cytoplasm. The catalysed reaction is dUMP + (6R)-5,10-methylene-5,6,7,8-tetrahydrofolate = 7,8-dihydrofolate + dTMP. The protein operates within pyrimidine metabolism; dTTP biosynthesis. In terms of biological role, catalyzes the reductive methylation of 2'-deoxyuridine-5'-monophosphate (dUMP) to 2'-deoxythymidine-5'-monophosphate (dTMP) while utilizing 5,10-methylenetetrahydrofolate (mTHF) as the methyl donor and reductant in the reaction, yielding dihydrofolate (DHF) as a by-product. This enzymatic reaction provides an intracellular de novo source of dTMP, an essential precursor for DNA biosynthesis. The chain is Thymidylate synthase from Bartonella henselae (strain ATCC 49882 / DSM 28221 / CCUG 30454 / Houston 1) (Rochalimaea henselae).